Here is a 469-residue protein sequence, read N- to C-terminus: 3-isopropylmalate dehydratase large subunit (469 aa).

Cys350, Cys410, and Cys413 together coordinate [4Fe-4S] cluster.

The protein belongs to the aconitase/IPM isomerase family. LeuC type 1 subfamily. In terms of assembly, heterodimer of LeuC and LeuD. [4Fe-4S] cluster is required as a cofactor.

It carries out the reaction (2R,3S)-3-isopropylmalate = (2S)-2-isopropylmalate. It functions in the pathway amino-acid biosynthesis; L-leucine biosynthesis; L-leucine from 3-methyl-2-oxobutanoate: step 2/4. In terms of biological role, catalyzes the isomerization between 2-isopropylmalate and 3-isopropylmalate, via the formation of 2-isopropylmaleate. The chain is 3-isopropylmalate dehydratase large subunit from Rhizobium johnstonii (strain DSM 114642 / LMG 32736 / 3841) (Rhizobium leguminosarum bv. viciae).